Here is a 332-residue protein sequence, read N- to C-terminus: 2,3-diketo-L-gulonate reductase (332 aa).

The active-site Proton donor is the His44. NAD(+) is bound by residues 168–174, 224–225, and 304–306; these read ITMVDMS, WK, and GHE.

The protein belongs to the LDH2/MDH2 oxidoreductase family. DlgD subfamily. As to quaternary structure, homodimer.

It is found in the cytoplasm. It catalyses the reaction 3-dehydro-L-gulonate + NAD(+) = 2,3-dioxo-L-gulonate + NADH + H(+). The enzyme catalyses 3-dehydro-L-gulonate + NADP(+) = 2,3-dioxo-L-gulonate + NADPH + H(+). Its function is as follows. Catalyzes the reduction of 2,3-diketo-L-gulonate in the presence of NADH, to form 3-keto-L-gulonate. In Shigella boydii serotype 4 (strain Sb227), this protein is 2,3-diketo-L-gulonate reductase.